Here is a 663-residue protein sequence, read N- to C-terminus: 4-hydroxy-3-methylbut-2-en-1-yl diphosphate synthase (flavodoxin) (663 aa).

Residues C568, C571, C602, and E609 each coordinate [4Fe-4S] cluster.

The protein belongs to the IspG family. The cofactor is [4Fe-4S] cluster.

The catalysed reaction is (2E)-4-hydroxy-3-methylbut-2-enyl diphosphate + oxidized [flavodoxin] + H2O + 2 H(+) = 2-C-methyl-D-erythritol 2,4-cyclic diphosphate + reduced [flavodoxin]. It participates in isoprenoid biosynthesis; isopentenyl diphosphate biosynthesis via DXP pathway; isopentenyl diphosphate from 1-deoxy-D-xylulose 5-phosphate: step 5/6. Converts 2C-methyl-D-erythritol 2,4-cyclodiphosphate (ME-2,4cPP) into 1-hydroxy-2-methyl-2-(E)-butenyl 4-diphosphate. The polypeptide is 4-hydroxy-3-methylbut-2-en-1-yl diphosphate synthase (flavodoxin) (Leptospira interrogans serogroup Icterohaemorrhagiae serovar copenhageni (strain Fiocruz L1-130)).